A 306-amino-acid chain; its full sequence is Arylesterase (306 aa).

The Involved in the stabilization of the negatively charged intermediate by the formation of the oxyanion hole signature appears at 82–84 (HGG). Residues Ser-156, Asp-251, and His-281 contribute to the active site.

Monomer.

It carries out the reaction a phenyl acetate + H2O = a phenol + acetate + H(+). The enzyme catalyses An aryl dialkyl phosphate + H2O = dialkyl phosphate + an aryl alcohol.. Its activity is regulated as follows. Completely inhibited by chemical modifiers that are specific to Cys (HgCl(2) and p-chloromercuribenzoic acid), His (diethyl pyrocarbonate) and Ser (diisopropyl fluorophosphate and phenylmethanesulfonyl fluoride). No significant effect with chemical modifiers specific to Lys (pyridoxal 5'-phosphate) and Arg (phenylglyoxal). Not inhibited by inhibitors of A-esterases (paraoxon) or C-esterases (physostigmine/eserine). Activity is also not effected by incubation with 5 mM divalent cations for 30 minutes at 30 degrees Celsius or with 10 mM EDTA for 60 minutes at 75 degrees Celsius. In terms of biological role, has a broad substrate specificity. Hydrolyzes various p-nitrophenyl phosphates, aromatic esters and p-nitrophenyl fatty acids in vitro. Most active against paraoxon, phenyl acetate and p-nitrophenyl caproate (C6), respectively. Also has tributyrinase activity, but shows no hydrolytic activity toward other triacylglycerols including tricaprylin, trimyristin, tripalmitin or triolein in vitro. The polypeptide is Arylesterase (Saccharolobus solfataricus (Sulfolobus solfataricus)).